The sequence spans 100 residues: NADH-quinone oxidoreductase subunit K (100 aa).

3 helical membrane passes run 4 to 24 (LSYS…GIMI), 29 to 49 (LFLL…FVIV), and 60 to 80 (VMYI…LALL).

This sequence belongs to the complex I subunit 4L family. As to quaternary structure, NDH-1 is composed of 14 different subunits. Subunits NuoA, H, J, K, L, M, N constitute the membrane sector of the complex.

The protein localises to the cell membrane. It catalyses the reaction a quinone + NADH + 5 H(+)(in) = a quinol + NAD(+) + 4 H(+)(out). Functionally, NDH-1 shuttles electrons from NADH, via FMN and iron-sulfur (Fe-S) centers, to quinones in the respiratory chain. The immediate electron acceptor for the enzyme in this species is believed to be ubiquinone. Couples the redox reaction to proton translocation (for every two electrons transferred, four hydrogen ions are translocated across the cytoplasmic membrane), and thus conserves the redox energy in a proton gradient. This chain is NADH-quinone oxidoreductase subunit K, found in Baumannia cicadellinicola subsp. Homalodisca coagulata.